The following is a 102-amino-acid chain: uncharacterized protein (102 aa).

This is an uncharacterized protein from Methanocaldococcus jannaschii (strain ATCC 43067 / DSM 2661 / JAL-1 / JCM 10045 / NBRC 100440) (Methanococcus jannaschii).